A 147-amino-acid polypeptide reads, in one-letter code: Globin (147 aa).

A Globin domain is found at 1-147 (GLDGAQKTAL…LLTMLIKAHV (147 aa)). Heme b-binding residues include His66 and His98.

This sequence belongs to the globin family. In terms of assembly, homodimer.

Its subcellular location is the cytoplasm. The chain is Globin from Busycotypus canaliculatus (Channeled whelk).